A 266-amino-acid chain; its full sequence is 26 kDa endochitinase 2 (266 aa).

The signal sequence occupies residues 1 to 23 (MRSLAVVVAVVATVAMAIGTARG). Cystine bridges form between C46–C108, C120–C128, and C227–C259. E90 acts as the Proton donor in catalysis.

Belongs to the glycosyl hydrolase 19 family. Chitinase class II subfamily.

The enzyme catalyses Random endo-hydrolysis of N-acetyl-beta-D-glucosaminide (1-&gt;4)-beta-linkages in chitin and chitodextrins.. In terms of biological role, defense against chitin-containing fungal pathogens. This Hordeum vulgare (Barley) protein is 26 kDa endochitinase 2.